The following is a 61-amino-acid chain: Small ribosomal subunit protein bS21 (61 aa).

The protein belongs to the bacterial ribosomal protein bS21 family.

The polypeptide is Small ribosomal subunit protein bS21 (Leuconostoc mesenteroides subsp. mesenteroides (strain ATCC 8293 / DSM 20343 / BCRC 11652 / CCM 1803 / JCM 6124 / NCDO 523 / NBRC 100496 / NCIMB 8023 / NCTC 12954 / NRRL B-1118 / 37Y)).